Here is a 290-residue protein sequence, read N- to C-terminus: Ventral anterior homeobox 2 (290 aa).

Residues 1–17 (MGDGGAERDRGPARRAE) are compositionally biased toward basic and acidic residues. Positions 1–75 (MGDGGAERDR…GQPGPGEADH (75 aa)) are disordered. The segment at residues 102–161 (PKRTRTSFTAEQLYRLEMEFQRCQYVVGRERTELARQLNLSETQVKVWFQNRRTKQKKDQ) is a DNA-binding region (homeobox). A disordered region spans residues 205 to 240 (PSLPGLPASHRGTSLGDPRNSSPRLNPLSSASASPP). Residues 222–238 (PRNSSPRLNPLSSASAS) are compositionally biased toward low complexity.

This sequence belongs to the EMX homeobox family.

It localises to the nucleus. Transcription factor that may function in dorsoventral specification of the forebrain. Regulates the expression of Wnt signaling antagonists including the expression of a truncated TCF7L2 isoform that cannot bind CTNNB1 and acts therefore as a potent dominant-negative Wnt antagonist. Plays a crucial role in eye development and, in particular, in the specification of the ventral optic vesicle. May be a regulator of axial polarization in the retina. This chain is Ventral anterior homeobox 2 (VAX2), found in Homo sapiens (Human).